Consider the following 280-residue polypeptide: uncharacterized protein (280 aa).

6 consecutive transmembrane segments (helical) span residues 3–23, 52–72, 81–101, 123–143, 196–216, and 233–253; these read ILIT…GMYI, FGLF…GSIV, INGL…NLQI, NWLV…LILL, FADI…IIIG, and IFAC…LLHI.

The protein localises to the cell membrane. This is an uncharacterized protein from Rickettsia prowazekii (strain Madrid E).